The primary structure comprises 840 residues: Leucine--tRNA ligase (840 aa).

Positions proline 44–histidine 55 match the 'HIGH' region motif. The short motif at lysine 617–serine 621 is the 'KMSKS' region element. Lysine 620 lines the ATP pocket.

Belongs to the class-I aminoacyl-tRNA synthetase family.

The protein resides in the cytoplasm. It catalyses the reaction tRNA(Leu) + L-leucine + ATP = L-leucyl-tRNA(Leu) + AMP + diphosphate. The protein is Leucine--tRNA ligase of Borreliella burgdorferi (strain ZS7) (Borrelia burgdorferi).